We begin with the raw amino-acid sequence, 359 residues long: 3-dehydroquinate synthase (359 aa).

Residues 70–75 (DGEQYK), 105–109 (GVIGD), 129–130 (TT), Lys142, Lys151, and 169–172 (FYKT) contribute to the NAD(+) site. Glu184, His247, and His264 together coordinate Zn(2+).

It belongs to the sugar phosphate cyclases superfamily. Dehydroquinate synthase family. The cofactor is Co(2+). Requires Zn(2+) as cofactor. NAD(+) serves as cofactor.

The protein resides in the cytoplasm. It catalyses the reaction 7-phospho-2-dehydro-3-deoxy-D-arabino-heptonate = 3-dehydroquinate + phosphate. Its pathway is metabolic intermediate biosynthesis; chorismate biosynthesis; chorismate from D-erythrose 4-phosphate and phosphoenolpyruvate: step 2/7. Catalyzes the conversion of 3-deoxy-D-arabino-heptulosonate 7-phosphate (DAHP) to dehydroquinate (DHQ). The protein is 3-dehydroquinate synthase of Francisella tularensis subsp. mediasiatica (strain FSC147).